A 752-amino-acid chain; its full sequence is Kaurene synthase like 2, chloroplastic (752 aa).

Residues 1–28 constitute a chloroplast transit peptide; sequence MSLLLSNSALVGPKFRSSRISHASASLD. Residues aspartate 538, aspartate 542, asparagine 682, and glutamate 690 each coordinate Mg(2+). The DDXXD motif motif lies at 538–542; it reads DDLFD.

The protein belongs to the terpene synthase family. Requires Mg(2+) as cofactor. In terms of tissue distribution, highly expressed in leaves.

Its subcellular location is the plastid. It localises to the chloroplast. It participates in secondary metabolite biosynthesis; terpenoid biosynthesis. Functionally, involved in the biosynthesis of ent-kaurene diterpenoids natural products such as oridonin, miltiradiene, eriocalyxin B and nezukol, known to exhibit antitumor, anti-inflammatory and antibacterial activities. Catalyzes the conversion of ent-copalyl diphosphate (ent-CPP) to ent-isopimaradiene like compounds. This chain is Kaurene synthase like 2, chloroplastic, found in Isodon rubescens (Rabdosia rubescens).